The sequence spans 87 residues: Large ribosomal subunit protein bL31B (87 aa).

The protein belongs to the bacterial ribosomal protein bL31 family. Type B subfamily. Part of the 50S ribosomal subunit.

The protein is Large ribosomal subunit protein bL31B of Burkholderia ambifaria (strain MC40-6).